Reading from the N-terminus, the 106-residue chain is Small ribosomal subunit protein uS10 (106 aa).

This sequence belongs to the universal ribosomal protein uS10 family. Part of the 30S ribosomal subunit.

Functionally, involved in the binding of tRNA to the ribosomes. This Caldicellulosiruptor bescii (strain ATCC BAA-1888 / DSM 6725 / KCTC 15123 / Z-1320) (Anaerocellum thermophilum) protein is Small ribosomal subunit protein uS10.